Here is a 675-residue protein sequence, read N- to C-terminus: MASTVLYNSLTTSTTVFLRSHLPISSSSPNDELHHQSSVISNCNYYLKKSSFGGQRKKLKENNNYVKAAAVAESLKTYPNEVAGDVPEKKLRILVAGGGIGGLVFALAAKKRGFDVKVFEKDLSAIRGEGKYRGPIQVQSNALAALEAIDMDVAEKVLAAGCVTGDRINGLVDGVSGNWYVKFDTFTPAVERGLPVTRVISRMTLQQILAEAVGEEVITNESNVVDFKDDGNKVSVTLDNGKTFEGDLLVGADGIWSKVRTNLFGHSDAVYSGYTCYTGIADYVPADIDSVGYRVFLGNKQYFVSSDVGGGKMQWYAFYKEAPGGVDQPNGMKQRLFDIFEGWCDNVIDVIIATDEEAILRRDIYDRTPKLTWGQGRVTLLGDSVHAMQPNLGQGGCMAIEDSYELALTLDKAWQKSVESGRPIDVASSLKSYEGARRLRVGVIHGLARLAAVMATTYKSYLGIGLGPLSFLTKLRIPHPGRVGGRFFITPAMPLMLRWILGGNSEKLEGRIPYCSLSEKASNNLQRWFEDDDALERALTGEWTLLPQGSVAGSLKPICLSRKEDEPCIIGGVFHKDSSGMSVALSSPQISEKHAQITCKNGAYFVTDLGSEHGTWITDNEGRNYRLPPNFPTRFHPSDVIEFGTDKKAVYRVKVMATPPKASQNSPSAAVLQTA.

The transit peptide at 1-25 (MASTVLYNSLTTSTTVFLRSHLPIS) directs the protein to the chloroplast. Residues 92-120 (RILV…KVFE) and 370-383 (KLTW…LLGD) each bind FAD. One can recognise an FHA domain in the interval 558–622 (ICLSRKEDEP…HGTWITDNEG (65 aa)).

Requires FAD as cofactor.

It localises to the plastid. The protein resides in the chloroplast thylakoid membrane. The enzyme catalyses all-trans-zeaxanthin + 4 reduced [2Fe-2S]-[ferredoxin] + 2 O2 + 4 H(+) = all-trans-violaxanthin + 4 oxidized [2Fe-2S]-[ferredoxin] + 2 H2O. Its pathway is plant hormone biosynthesis; abscisate biosynthesis. Its activity is regulated as follows. Inhibited by diphenyleneiodonium (DPI). In terms of biological role, converts zeaxanthin into antheraxanthin and subsequently violaxanthin. Involved in the epoxidation of zeaxanthin. The protein is Zeaxanthin epoxidase, chloroplastic of Spinacia oleracea (Spinach).